The sequence spans 217 residues: Probable transaldolase (217 aa).

Catalysis depends on K83, which acts as the Schiff-base intermediate with substrate.

It belongs to the transaldolase family. Type 3B subfamily.

The protein resides in the cytoplasm. It carries out the reaction D-sedoheptulose 7-phosphate + D-glyceraldehyde 3-phosphate = D-erythrose 4-phosphate + beta-D-fructose 6-phosphate. It participates in carbohydrate degradation; pentose phosphate pathway; D-glyceraldehyde 3-phosphate and beta-D-fructose 6-phosphate from D-ribose 5-phosphate and D-xylulose 5-phosphate (non-oxidative stage): step 2/3. Its function is as follows. Transaldolase is important for the balance of metabolites in the pentose-phosphate pathway. The sequence is that of Probable transaldolase from Bartonella tribocorum (strain CIP 105476 / IBS 506).